Reading from the N-terminus, the 357-residue chain is Chorismate synthase (357 aa).

Arg47 contacts NADP(+). FMN-binding positions include 123–125, Gly281, 296–300, and Arg324; these read RAS and KPTSS.

Belongs to the chorismate synthase family. In terms of assembly, homotetramer. It depends on FMNH2 as a cofactor.

The catalysed reaction is 5-O-(1-carboxyvinyl)-3-phosphoshikimate = chorismate + phosphate. The protein operates within metabolic intermediate biosynthesis; chorismate biosynthesis; chorismate from D-erythrose 4-phosphate and phosphoenolpyruvate: step 7/7. Its function is as follows. Catalyzes the anti-1,4-elimination of the C-3 phosphate and the C-6 proR hydrogen from 5-enolpyruvylshikimate-3-phosphate (EPSP) to yield chorismate, which is the branch point compound that serves as the starting substrate for the three terminal pathways of aromatic amino acid biosynthesis. This reaction introduces a second double bond into the aromatic ring system. This Chlamydia trachomatis serovar A (strain ATCC VR-571B / DSM 19440 / HAR-13) protein is Chorismate synthase.